Here is a 309-residue protein sequence, read N- to C-terminus: Homoserine kinase (309 aa).

85–95 (PYGLGLGSSGS) contributes to the ATP binding site.

It belongs to the GHMP kinase family. Homoserine kinase subfamily.

The protein resides in the cytoplasm. The enzyme catalyses L-homoserine + ATP = O-phospho-L-homoserine + ADP + H(+). The protein operates within amino-acid biosynthesis; L-threonine biosynthesis; L-threonine from L-aspartate: step 4/5. Functionally, catalyzes the ATP-dependent phosphorylation of L-homoserine to L-homoserine phosphate. The protein is Homoserine kinase of Thermoplasma volcanium (strain ATCC 51530 / DSM 4299 / JCM 9571 / NBRC 15438 / GSS1).